Reading from the N-terminus, the 859-residue chain is Protein EFR3 homolog (859 aa).

The segment covering 696 to 714 has biased composition (polar residues); that stretch reads RKNDGSGDQWQNDTPNFDS. Positions 696–728 are disordered; that stretch reads RKNDGSGDQWQNDTPNFDSTDGRESPSGYKTVG.

This sequence belongs to the EFR3 family.

This chain is Protein EFR3 homolog, found in Caenorhabditis elegans.